Here is a 1321-residue protein sequence, read N- to C-terminus: Bile salt export pump (1321 aa).

Residues 1-62 lie on the Cytoplasmic side of the membrane; it reads MSDSVILRSI…FSSSTDIWLM (62 aa). The disordered stretch occupies residues 16 to 37; the sequence is ENDGFESDKSYNNDKKSRLQDE. Residues 21 to 37 are compositionally biased toward basic and acidic residues; that stretch reads ESDKSYNNDKKSRLQDE. The 324-residue stretch at 62-385 folds into the ABC transmembrane type-1 1 domain; the sequence is MFVGSLCAFL…ASPCLEAFAT (324 aa). The chain crosses the membrane as a helical span at residues 63–83; sequence FVGSLCAFLHGIAQPGVLLIF. Residues 84–147 are Extracellular-facing; the sequence is GTMTDVFIDY…MIKFASYYAG (64 aa). 4 N-linked (GlcNAc...) asparagine glycosylation sites follow: Asn-109, Asn-116, Asn-122, and Asn-125. A helical membrane pass occupies residues 148–168; it reads IAVAVLITGYIQICFWVIAAA. The Cytoplasmic portion of the chain corresponds to 169–215; the sequence is RQIQKMRKFYFRRIMRMEIGWFDCNSVGELNTRFSDDINKINDAIAD. Residues 216-236 traverse the membrane as a helical segment; the sequence is QMALFIQRMTSTICGFLLGFF. At 237 to 240 the chain is on the extracellular side; that stretch reads RGWK. A helical membrane pass occupies residues 241-261; that stretch reads LTLVIISVSPLIGIGAATIGL. Over 262 to 319 the chain is Cytoplasmic; it reads SVSKFTDYELKAYAKAGVVADEVISSMRTVAAFGGEKREVERYEKNLVFAQRWGIRKG. The chain crosses the membrane as a helical span at residues 320–340; sequence IVMGFFTGFVWCLIFLCYALA. At 341-353 the chain is on the extracellular side; sequence FWYGSTLVLDEGE. The chain crosses the membrane as a helical span at residues 354–374; sequence YTPGTLVQIFLSVIVGALNLG. The Cytoplasmic segment spans residues 375–755; that stretch reads NASPCLEAFA…KFSAPEWPYM (381 aa). The ABC transporter 1 domain occupies 420–656; the sequence is IEFHNVTFHY…KGVYFTLVTL (237 aa). Residue 455–462 coordinates ATP; the sequence is GPSGAGKS. Thr-586 bears the Phosphothreonine mark. At Ser-587 the chain carries Phosphoserine. Positions 651–672 are interaction with HAX1; it reads FTLVTLQSQGNQALNEEDIKDA. Ser-690, Ser-701, and Ser-704 each carry phosphoserine. The 289-residue stretch at 755–1043 folds into the ABC transmembrane type-1 2 domain; it reads MLVGSVGAAV…AFSYTPSYAK (289 aa). A helical transmembrane segment spans residues 756 to 776; it reads LVGSVGAAVNGTVTPLYAFLF. Residues 777–794 are Extracellular-facing; that stretch reads SQILGTFSIPDKEEQRSQ. Residues 795–815 traverse the membrane as a helical segment; it reads INGVCLLFVAMGCVSLFTQFL. The Cytoplasmic segment spans residues 816-869; sequence QGYAFAKSGELLTKRLRKFGFRAMLGQDIAWFDDLRNSPGALTTRLATDASQVQ. The next 2 helical transmembrane spans lie at 870 to 890 and 891 to 911; these read GAAG…TVAM and IIAF…FPFL. Residues 912–979 lie on the Cytoplasmic side of the membrane; the sequence is ALSGATQTRM…PFKTAIQKAN (68 aa). Residues 980–1000 form a helical membrane-spanning segment; sequence IYGFCFAFAQCIMFIANSASY. Residues 1001-1011 are Extracellular-facing; that stretch reads RYGGYLISNEG. The chain crosses the membrane as a helical span at residues 1012–1032; that stretch reads LHFSYVFRVISAVVLSATALG. Over 1033–1321 the chain is Cytoplasmic; that stretch reads RAFSYTPSYA…KLVTTGSPIS (289 aa). The ABC transporter 2 domain occupies 1078–1316; that stretch reads IDFVDCKFTY…KGAYYKLVTT (239 aa). Residue 1113 to 1120 coordinates ATP; it reads GSSGCGKS. At Ser-1214 the chain carries Phosphoserine. The interval 1311 to 1314 is mediates internalization from the plasma membrane; it reads YKLV. Ser-1321 is subject to Phosphoserine.

The protein belongs to the ABC transporter superfamily. ABCB family. Multidrug resistance exporter (TC 3.A.1.201) subfamily. In terms of assembly, interacts with HAX1. Interacts with the adapter protein complex 2 (AP-2) throught AP2A2 or AP2A1; this interaction regulates cell membrane expression of ABCB11 through its internalization in a clathrin-dependent manner and its subsequent degradation. In terms of processing, N-glycosylated. Post-translationally, ubiquitinated; short-chain ubiquitination regulates cell-Surface expression of ABCB11. Expressed predominantly, if not exclusively in the liver, where it was further localized to the canalicular microvilli and to subcanalicular vesicles of the hepatocytes by in situ.

The protein resides in the apical cell membrane. The protein localises to the recycling endosome membrane. Its subcellular location is the endosome. It localises to the cell membrane. The enzyme catalyses cholate(in) + ATP + H2O = cholate(out) + ADP + phosphate + H(+). The catalysed reaction is taurocholate(in) + ATP + H2O = taurocholate(out) + ADP + phosphate + H(+). It catalyses the reaction glycocholate(in) + ATP + H2O = glycocholate(out) + ADP + phosphate + H(+). It carries out the reaction glycochenodeoxycholate(in) + ATP + H2O = glycochenodeoxycholate(out) + ADP + phosphate + H(+). The enzyme catalyses taurochenodeoxycholate(in) + ATP + H2O = taurochenodeoxycholate(out) + ADP + phosphate + H(+). The catalysed reaction is glycoursodeoxycholate(in) + ATP + H2O = glycoursodeoxycholate(out) + ADP + phosphate + H(+). It catalyses the reaction tauroursodeoxycholate(in) + ATP + H2O = tauroursodeoxycholate(out) + ADP + phosphate + H(+). It carries out the reaction taurodeoxycholate(in) + ATP + H2O = taurodeoxycholate(out) + ADP + phosphate + H(+). The enzyme catalyses taurolithocholate 3-sulfate(in) + ATP + H2O = taurolithocholate 3-sulfate(out) + ADP + phosphate + H(+). The catalysed reaction is pravastatin(in) + ATP + H2O = pravastatin(out) + ADP + phosphate + H(+). The uptake of taurocholate is inhibited by taurolithocholate sulfate with an IC(50) of 9 uM. Pravastatin competitively inhibits the transport of taurocholic acid. Cyclosporin A, glibenclamide, rifampicin and troglitazonestrongly competitively inhibit the transport activity of taurocholate. The canalicular transport activity of taurocholate is strongly dependent on canalicular membrane cholesterol content. The uptake of taurocholate is increased by short- and medium-chain fatty acids. Cholesterol increases transport capacity of taurocholate without affecting the affinity for the substrate. Catalyzes the transport of the major hydrophobic bile salts, such as taurine and glycine-conjugated cholic acid across the canalicular membrane of hepatocytes in an ATP-dependent manner, therefore participates in hepatic bile acid homeostasis and consequently to lipid homeostasis through regulation of biliary lipid secretion in a bile salts dependent manner. Transports taurine-conjugated bile salts more rapidly than glycine-conjugated bile salts. Also transports non-bile acid compounds, such as pravastatin and fexofenadine in an ATP-dependent manner and may be involved in their biliary excretion. This is Bile salt export pump from Homo sapiens (Human).